Here is a 501-residue protein sequence, read N- to C-terminus: MFSLQDICRKHLFQVPDAFDEYILQALGLYWEKHGSLQRIRKDAVFVQRNLTISTNEALRIAASEGNERVINLLLSWEGNFHYVIIGALEGNRYDLIHKYGSQIKDYHMILSSIQNANTFEKCHELSNCDMWCLIDNAIKYNMLSILQKHRNFLTEELENQEFFETACEEQKYDIVLWMGQTLLLDEPKFIFDTAFKMVDFSLLTIGYSLLFDNKMDIQDDLTSLLTEHLEIAAAKGQLYFMLETLKHGGDVNFEVLSKAVENDHRKILDYFIRRQQYLSREDIENLLLSAITNCASKKTLNLLLSYLNYSIKNITEKIVQHVIKGGDYTIIILLKKKKINLVEPVLTGFIDHYYGNCFIENFIREFAIRPEKVIKMAARKGKLNMIIEFLNEKYVHKDDLGTIFKLLKNLVCTMKHKKGKETLLILIHEIYRAIHLDTKEKFKLLRFYVMHDATIQFLSMCKDCFNLAGFKPFVLECLDIAIKKNHPNMIENIEILSKYE.

Belongs to the asfivirus MGF 505 family.

Functionally, plays a role in virus cell tropism, and may be required for efficient virus replication in macrophages. The sequence is that of Protein MGF 505-4R from African swine fever virus (isolate Tick/South Africa/Pretoriuskop Pr4/1996) (ASFV).